The sequence spans 202 residues: Methylthioribulose-1-phosphate dehydratase (202 aa).

Residues H93 and H95 each contribute to the Zn(2+) site.

This sequence belongs to the aldolase class II family. MtnB subfamily. Requires Zn(2+) as cofactor.

It catalyses the reaction 5-(methylsulfanyl)-D-ribulose 1-phosphate = 5-methylsulfanyl-2,3-dioxopentyl phosphate + H2O. It participates in amino-acid biosynthesis; L-methionine biosynthesis via salvage pathway; L-methionine from S-methyl-5-thio-alpha-D-ribose 1-phosphate: step 2/6. Functionally, catalyzes the dehydration of methylthioribulose-1-phosphate (MTRu-1-P) into 2,3-diketo-5-methylthiopentyl-1-phosphate (DK-MTP-1-P). This chain is Methylthioribulose-1-phosphate dehydratase, found in Klebsiella pneumoniae (strain 342).